A 776-amino-acid polypeptide reads, in one-letter code: MADRSAIQLIDEEKEFHQSALQYFQQCIGNRDVGLDYHVISVFGSQSSGKSTLLNVLFNTNFDTMDAQVKRQQTTKGIWLAHTKQVNTTIEIDNDRPDIFVLDVEGSDGSERGEDQDFERKAALFAIAVSEVLIVNMWEQQIGLYQGNNMALLKTVFEVNLSLFGKNDNDHKVLLLFVIRDHVGVTPLSSLSDSVTRELEKIWTELSKPAGCEGSSLYDYFDLKFVGLAHKLLQEDKFTQDVKKLGDSFVMKGTENYYFKPQYHHRLPLDGWTMYAENCWDQIERNKDLDLPTQQILVARFKTEEISNEALEEFISKYDESIAPLKGNLGSLTSQLVKLKEECLTKYDEQASRYARNVYMEKREALNTKLNSHISGTINEFLESLMEKLWDDLKLEVSSRDKATTSFVESVAAGKSKIEKEFNESMETFKKLGLLISNEEITCKFSDDIEERIKQLCDAELKAKIGRIKKNLVPELKDHVIHLLSHPSKKVWDDIMNDFESTIKDNISAYQVEKDKYDFKIGLSESENAKIYKNIRILAWRTLDTTVHDYLKIDTIVSILRDRFEDVFRYDAEGSPRLWKTEEEIDGAFRVAKEHALEVFEVLSLAVTSDNVEIIPDVPMAEEESGEDNEIYRDNEGVFHSRRFAHILTELQKENVLDQFRRQINITVLDSKRSIITTRTHIPPWIYVLLAVLGWNEFVAVIRNPLFVTLTLILGATFFVIHKFGLWGPVVNVVQSAVGETRTAIKDKLRQFVVEDHEVKESFEMKDFSKNEQKEK.

The Cytoplasmic portion of the chain corresponds to 1–681 (MADRSAIQLI…KRSIITTRTH (681 aa)). Residues 34 to 263 (GLDYHVISVF…TENYYFKPQY (230 aa)) form the GB1/RHD3-type G domain. 44–51 (GSQSSGKS) lines the GTP pocket. A helical transmembrane segment spans residues 682–702 (IPPWIYVLLAVLGWNEFVAVI). At 703-705 (RNP) the chain is on the lumenal side. Residues 706-726 (LFVTLTLILGATFFVIHKFGL) traverse the membrane as a helical segment. The Cytoplasmic segment spans residues 727 to 776 (WGPVVNVVQSAVGETRTAIKDKLRQFVVEDHEVKESFEMKDFSKNEQKEK).

It belongs to the TRAFAC class dynamin-like GTPase superfamily. GB1/RHD3 GTPase family. RHD3 subfamily. In terms of assembly, interacts with RTN1 and YOP1; GTP binding is not required for these interactions.

It localises to the endoplasmic reticulum membrane. Its function is as follows. Cooperates with the reticulon proteins RTN1 and RTN2 and the tubule-shaping DP1 family protein YOP1 to generate and maintain the structure of the tubular endoplasmic reticulum network. Has GTPase activity, which is required for its function in ER organization. The protein is Protein SEY1 of Saccharomyces cerevisiae (strain YJM789) (Baker's yeast).